The sequence spans 283 residues: Mau operon transcriptional activator (283 aa).

Residues 1–58 enclose the HTH lysR-type domain; it reads MNWDDLRVVAAINRCGSFNRAAKMLNVEETTIARRLARLEGSLGCVLFQAVDGQRRPT. The segment at residues 18-37 is a DNA-binding region (H-T-H motif); sequence FNRAAKMLNVEETTIARRLA.

The protein belongs to the LysR transcriptional regulatory family.

In terms of biological role, transcriptional activator of the mau genes involved in methylamine metabolism. This Paracoccus denitrificans protein is Mau operon transcriptional activator (mauR).